A 977-amino-acid chain; its full sequence is Probable RNA-dependent RNA polymerase 5 (977 aa).

The segment at Glu103–Lys122 is disordered.

Belongs to the RdRP family.

It catalyses the reaction RNA(n) + a ribonucleoside 5'-triphosphate = RNA(n+1) + diphosphate. Functionally, probably involved in the RNA silencing pathway and required for the generation of small interfering RNAs (siRNAs). In Arabidopsis thaliana (Mouse-ear cress), this protein is Probable RNA-dependent RNA polymerase 5 (RDR5).